A 353-amino-acid polypeptide reads, in one-letter code: Hydrazine synthase subunit gamma (353 aa).

Positions 1–39 are cleaved as a signal peptide; sequence MAREMRLGGKERMKTGVVKIGLVAALGVVGLISAGGVYA. Heme c-binding residues include Cys-102, Cys-105, and His-106. Asp-118, Leu-119, Glu-122, Gly-123, Ser-126, Asn-129, Leu-139, and Pro-141 together coordinate Ca(2+). Residues Cys-165, Cys-225, Cys-228, and His-229 each coordinate heme c. Residues 209 to 353 enclose the Cytochrome c domain; it reads EAQKRGQKIF…QDLVEYLKAL (145 aa). Ca(2+) is bound by residues Asp-296, Ser-306, Gly-307, and Thr-308. Position 332 (His-332) interacts with heme c.

In terms of assembly, part of the hydrazine synthase complex that forms an elongated dimer of heterotrimers composed of one alpha, one beta and one gamma subunit. Heme c serves as cofactor.

The protein localises to the anammoxosome. The catalysed reaction is hydrazine + 3 Fe(III)-[cytochrome c] + H2O = nitric oxide + 3 Fe(II)-[cytochrome c] + NH4(+) + 2 H(+). It functions in the pathway nitrogen metabolism. In terms of biological role, component of the hydrazine synthase complex that catalyzes the condensation of nitric oxide (NO) with ammonium to form hydrazine. The gamma subunit catalyzes the first half-reaction, i.e. the three-electron reduction of nitric oxide to hydroxylamine; it may obtain electrons from the triheme cytochrome c kuste2854. Is involved in anaerobic ammonium oxidation (anammox), a biological process in which nitrite is used as the electron acceptor in the conversion of ammonium to dinitrogen gas (N2) and water; this bacterial process has a major role in the Earth's nitrogen cycle and has been estimated to synthesize up to 50% of the dinitrogen gas emitted into our atmosphere from the oceans. This is Hydrazine synthase subunit gamma from Kuenenia stuttgartiensis.